The chain runs to 470 residues: UDP-N-acetylmuramoylalanine--D-glutamate ligase (470 aa).

ATP is bound at residue 121-127 (GTNGKST).

It belongs to the MurCDEF family.

It localises to the cytoplasm. It carries out the reaction UDP-N-acetyl-alpha-D-muramoyl-L-alanine + D-glutamate + ATP = UDP-N-acetyl-alpha-D-muramoyl-L-alanyl-D-glutamate + ADP + phosphate + H(+). The protein operates within cell wall biogenesis; peptidoglycan biosynthesis. In terms of biological role, cell wall formation. Catalyzes the addition of glutamate to the nucleotide precursor UDP-N-acetylmuramoyl-L-alanine (UMA). This chain is UDP-N-acetylmuramoylalanine--D-glutamate ligase, found in Rhizobium johnstonii (strain DSM 114642 / LMG 32736 / 3841) (Rhizobium leguminosarum bv. viciae).